A 169-amino-acid chain; its full sequence is Disulfide bond formation protein B 1 (169 aa).

At 1-14 (MSDNTLYLRREKRF) the chain is on the cytoplasmic side. The chain crosses the membrane as a helical span at residues 15–31 (LVLLGIICLALIGGALY). Topologically, residues 32-49 (MQVVLDEAPCPLCILQRY) are periplasmic. The cysteines at positions 41 and 44 are disulfide-linked. A helical transmembrane segment spans residues 50–65 (ALLFIAIFAFIGAAMP). Residues 66 to 72 (GRRSVTA) lie on the Cytoplasmic side of the membrane. The chain crosses the membrane as a helical span at residues 73-89 (FETLVTLSALGGIAAAG). The Periplasmic segment spans residues 90–144 (RHVWILAHPSDSCGIDVLQPIVDGLPLATLFPTGFQVSGFCTTPYPPVLGLSLAQ). A disulfide bridge links C102 with C130. Residues 145–163 (WALTAFVLTAVLVPACIIR) traverse the membrane as a helical segment. Residues 164 to 169 (NRRKPY) lie on the Cytoplasmic side of the membrane.

This sequence belongs to the DsbB family.

The protein localises to the cell inner membrane. In terms of biological role, required for disulfide bond formation in some periplasmic proteins. Acts by oxidizing the DsbA protein. This Pseudomonas syringae pv. syringae (strain B728a) protein is Disulfide bond formation protein B 1.